A 136-amino-acid chain; its full sequence is Transmembrane protein 203 (136 aa).

The tract at residues 1 to 51 (MLFSLRELVQWLGFATFEIFVHLLALLVFSVLLALRVDGLVPGLSWWNVFV) is interaction with STING1. 4 helical membrane-spanning segments follow: residues 14–34 (FATF…VLLA), 50–72 (FVPF…VRLF), 81–101 (VLRL…EMLL), and 112–132 (LWFG…MIRA). The interval 52–136 (PFFAADGLST…LLMIRACRVN (85 aa)) is required for the lysosomal localization of the STING-TMEM203 complex.

Homodimer. Interacts with ATP2A2, ITPR3 and STIM1. Interacts with STING1 (via transmembrane domain). Increased expression seen in T-lymphocytes from patients with systemic lupus erythematosus (SLE).

It localises to the endoplasmic reticulum membrane. The protein localises to the endoplasmic reticulum-Golgi intermediate compartment. It is found in the lysosome membrane. In terms of biological role, involved in the regulation of cellular calcium homeotasis. Required for spermatogenesis. Acts as a regulator of STING-mediated inflammatory signaling in macrophages. Forms a complex with STING, promoting the activity of TBK1 kinase and the transcription factor IRF3, leading to activation of type I interferon expression. This is Transmembrane protein 203 (TMEM203) from Homo sapiens (Human).